A 434-amino-acid polypeptide reads, in one-letter code: MDSVEKGAATSVSNPRGRPSRGRPPKLQRNSRGGQGRGVEKPPHLAALILARGGSKGIPLKNIKHLAGVPLIGWVLRAALDSGAFQSVWVSTDHDEIENVAKQFGAQVHRRSSEVSKDSSTSLDAIIEFLNYHNEVDIVGNIQATSPCLHPTDLQKVAEMIREEGYDSVFSVVRRHQFRWSEIQKGVREVTEPLNLNPAKRPRRQDWDGELYENGSFYFAKRHLIEMGYLQGGKMAYYEMRAEHSVDIDVDIDWPIAEQRVLRYGYFGKEKLKEIKLLVCNIDGCLTNGHIYVSGDQKEIISYDVKDAIGISLLKKSGIEVRLISERACSKQTLSSLKLDCKMEVSVSDKLAVVDEWRKEMGLCWKEVAYLGNEVSDEECLKRVGLSGAPADACSTAQKAVGYICKCNGGRGAIREFAEHICLLMEKVNNSCQK.

N-acetylmethionine is present on Met-1. Residues 1–42 are disordered; sequence MDSVEKGAATSVSNPRGRPSRGRPPKLQRNSRGGQGRGVEKP. The BC1 motif motif lies at 15–31; it reads PRGRPSRGRPPKLQRNS. Residues Arg-37 and Arg-52 each carry the omega-N-methylarginine modification. The substrate site is built by Arg-52, Asn-62, Arg-111, Ser-120, Ser-122, and Gln-143. The BC2 motif signature appears at 200–206; it reads KRPRRQD. Residue Arg-201 is part of the active site. Residues 269-276 carry the BC3 motif motif; that stretch reads KEKLKEIK.

The protein belongs to the CMP-NeuNAc synthase family. In terms of assembly, homotetramer; the active enzyme is formed by a dimer of dimers. As to expression, ubiquitously expressed. Expressed in pancreas, kidney, liver, skeletal muscle, lung, placenta, brain, heart, colon, PBL, small intestine, ovary, testis, prostate, thymus and spleen.

Its subcellular location is the nucleus. The catalysed reaction is an N-acylneuraminate + CTP = a CMP-N-acyl-beta-neuraminate + diphosphate. It participates in amino-sugar metabolism; N-acetylneuraminate metabolism. Catalyzes the activation of N-acetylneuraminic acid (NeuNAc) to cytidine 5'-monophosphate N-acetylneuraminic acid (CMP-NeuNAc), a substrate required for the addition of sialic acid. Has some activity toward NeuNAc, N-glycolylneuraminic acid (Neu5Gc) or 2-keto-3-deoxy-D-glycero-D-galacto-nononic acid (KDN). This is N-acylneuraminate cytidylyltransferase (CMAS) from Homo sapiens (Human).